A 630-amino-acid chain; its full sequence is tRNA uridine 5-carboxymethylaminomethyl modification enzyme MnmG (630 aa).

An FAD-binding site is contributed by glycine 15–glycine 20. Glycine 276–phenylalanine 290 lines the NAD(+) pocket.

This sequence belongs to the MnmG family. In terms of assembly, homodimer. Heterotetramer of two MnmE and two MnmG subunits. Requires FAD as cofactor.

It is found in the cytoplasm. Functionally, NAD-binding protein involved in the addition of a carboxymethylaminomethyl (cmnm) group at the wobble position (U34) of certain tRNAs, forming tRNA-cmnm(5)s(2)U34. The protein is tRNA uridine 5-carboxymethylaminomethyl modification enzyme MnmG of Latilactobacillus sakei subsp. sakei (strain 23K) (Lactobacillus sakei subsp. sakei).